A 272-amino-acid chain; its full sequence is Tryptophan synthase alpha chain (272 aa).

Catalysis depends on proton acceptor residues glutamate 49 and glutamate 60.

Belongs to the TrpA family. Tetramer of two alpha and two beta chains.

The enzyme catalyses (1S,2R)-1-C-(indol-3-yl)glycerol 3-phosphate + L-serine = D-glyceraldehyde 3-phosphate + L-tryptophan + H2O. The protein operates within amino-acid biosynthesis; L-tryptophan biosynthesis; L-tryptophan from chorismate: step 5/5. Its function is as follows. The alpha subunit is responsible for the aldol cleavage of indoleglycerol phosphate to indole and glyceraldehyde 3-phosphate. The chain is Tryptophan synthase alpha chain from Legionella pneumophila subsp. pneumophila (strain Philadelphia 1 / ATCC 33152 / DSM 7513).